A 195-amino-acid polypeptide reads, in one-letter code: MPKLGMQSIRRRQLIDATLEAINEVGMHDATIAQIARRAGVSTGIISHYFRDKNGLLEATMRDITSQLRDAVLNRLHALPQGSAEQRLQAIVGGNFDETQVSSAAMKAWLAFWASSMHQPMLYRLQQVSSRRLLSNLVSEFRRELPRHQAQEAGYGLAALIDGLWLRAALSGKPLDKPLAHSLTRHFITQHLPTD.

The 61-residue stretch at 8 to 68 folds into the HTH tetR-type domain; the sequence is SIRRRQLIDA…ATMRDITSQL (61 aa). Residues 31–50 constitute a DNA-binding region (H-T-H motif); it reads TIAQIARRAGVSTGIISHYF.

It functions in the pathway amine and polyamine biosynthesis; betaine biosynthesis via choline pathway [regulation]. Its function is as follows. Repressor involved in the biosynthesis of the osmoprotectant glycine betaine. It represses transcription of the choline transporter BetT and the genes of BetAB involved in the synthesis of glycine betaine. The protein is HTH-type transcriptional regulator BetI of Escherichia coli O157:H7.